The following is a 310-amino-acid chain: Ribosomal RNA small subunit methyltransferase H (310 aa).

S-adenosyl-L-methionine contacts are provided by residues 33–35 (AGH), Asp-53, Phe-79, Asp-100, and Gln-107.

This sequence belongs to the methyltransferase superfamily. RsmH family.

The protein resides in the cytoplasm. It carries out the reaction cytidine(1402) in 16S rRNA + S-adenosyl-L-methionine = N(4)-methylcytidine(1402) in 16S rRNA + S-adenosyl-L-homocysteine + H(+). Functionally, specifically methylates the N4 position of cytidine in position 1402 (C1402) of 16S rRNA. This chain is Ribosomal RNA small subunit methyltransferase H, found in Desulfitobacterium hafniense (strain DSM 10664 / DCB-2).